The primary structure comprises 548 residues: pH-responsive protein 1 (548 aa).

An N-terminal signal peptide occupies residues 1 to 20 (MYSLIKSLATFATLFSLTLA). Residue asparagine 41 is glycosylated (N-linked (GlcNAc...) asparagine). Cysteine 82 and cysteine 111 are disulfide-bonded. Residues asparagine 173 and asparagine 261 are each glycosylated (N-linked (GlcNAc...) asparagine). 5 disulfide bridges follow: cysteine 224–cysteine 358, cysteine 242–cysteine 273, cysteine 381–cysteine 432, cysteine 390–cysteine 456, and cysteine 409–cysteine 414. The segment at 483-518 (GKASSSGGSSKSGSSSASASGSSSSSTSSGSSSSSG) is disordered. Serine 517 carries GPI-anchor amidated serine lipidation. Residues 518–548 (GVKATQQMSMVKLVSIITIVTAFVGGMSVVF) constitute a propeptide, removed in mature form.

It belongs to the glycosyl hydrolase 72 family.

It is found in the cell membrane. In terms of biological role, required for apical cell growth and plays an essential role in morphogenesis. May be integral to the pathogenic ability of the organism. The protein is pH-responsive protein 1 (PHR1) of Candida albicans (strain SC5314 / ATCC MYA-2876) (Yeast).